A 229-amino-acid chain; its full sequence is Ribonuclease 3 (229 aa).

The 123-residue stretch at 5-127 (LSRLERQLGY…LIGAIYLDAG (123 aa)) folds into the RNase III domain. E40 is a binding site for Mg(2+). D44 is a catalytic residue. Mg(2+) contacts are provided by D113 and E116. Residue E116 is part of the active site. The 71-residue stretch at 154–224 (DPKTRLQEFL…AAAALIALGV (71 aa)) folds into the DRBM domain.

This sequence belongs to the ribonuclease III family. Homodimer. Mg(2+) is required as a cofactor.

Its subcellular location is the cytoplasm. The enzyme catalyses Endonucleolytic cleavage to 5'-phosphomonoester.. Digests double-stranded RNA. Involved in the processing of primary rRNA transcript to yield the immediate precursors to the large and small rRNAs (23S and 16S). Processes some mRNAs, and tRNAs when they are encoded in the rRNA operon. Processes pre-crRNA and tracrRNA of type II CRISPR loci if present in the organism. The sequence is that of Ribonuclease 3 from Pseudomonas syringae pv. tomato (strain ATCC BAA-871 / DC3000).